Here is a 294-residue protein sequence, read N- to C-terminus: Nucleotide-binding protein CA_C0511 (294 aa).

8–15 (GLSGAGKT) serves as a coordination point for ATP. 59–62 (DIRG) lines the GTP pocket.

It belongs to the RapZ-like family.

Displays ATPase and GTPase activities. The sequence is that of Nucleotide-binding protein CA_C0511 from Clostridium acetobutylicum (strain ATCC 824 / DSM 792 / JCM 1419 / IAM 19013 / LMG 5710 / NBRC 13948 / NRRL B-527 / VKM B-1787 / 2291 / W).